Here is a 452-residue protein sequence, read N- to C-terminus: Cholesterol 7-desaturase nvd 2 (452 aa).

The next 2 membrane-spanning stretches (helical) occupy residues 6–26 (LIRI…MGLC) and 32–52 (FPVM…ALVM). In terms of domain architecture, Rieske spans 107–212 (WFKVADSTWI…CCEVDGMAYL (106 aa)). [2Fe-2S] cluster contacts are provided by Cys148, His150, Cys169, and His172.

Belongs to the cholesterol 7-desaturase family. Requires [2Fe-2S] cluster as cofactor.

The protein localises to the membrane. The enzyme catalyses cholesterol + NADPH + O2 + H(+) = 7-dehydrocholesterol + NADP(+) + 2 H2O. It carries out the reaction cholesterol + NADH + O2 + H(+) = 7-dehydrocholesterol + NAD(+) + 2 H2O. It participates in steroid hormone biosynthesis; dafachronic acid biosynthesis. In terms of biological role, catalyzes the production of 7-dehydrocholesterol (7-DHC or cholesta-5,7-dien-3beta-ol) by inserting a double bond (desaturating) at the C7-C8 single bond of cholesterol. Essential regulator of steroid biosynthesis as this reaction is the first step in the synthesis of the steroid hormone Delta(7)-dafachronic acid. This is Cholesterol 7-desaturase nvd 2 from Ciona intestinalis (Transparent sea squirt).